A 371-amino-acid chain; its full sequence is Probable inactive methyltransferase Os04g0175900 (371 aa).

Leu137–Asn143 lines the substrate pocket. The segment at Leu170 to Met188 is substrate binding. S-adenosyl-L-methionine is bound by residues Gly216, Asp239, Met260, and Lys273.

Belongs to the class I-like SAM-binding methyltransferase superfamily. Cation-independent O-methyltransferase family. COMT subfamily.

The sequence is that of Probable inactive methyltransferase Os04g0175900 from Oryza sativa subsp. japonica (Rice).